Here is a 205-residue protein sequence, read N- to C-terminus: MLQATGVILAGGRSRRMGQEKALLEVGREAMIRRVAGVLKEVFAEVIISGGVEENGLRLGLRVVPDLIAGGGPLSGIHAALCGAAFAKCLVVACDMPFICPELARYMMEQSEGYDVAVPRHGQHLQPLFAVYSKGCIRAIEESLRAHKCKVIDFYPLVRVNYVSEENLRALADIEVAFFNVNTPSDLVKARVMAENSRTGRVWLV.

Residues 9-11 (LAG), K21, D66, and D95 contribute to the GTP site. A Mg(2+)-binding site is contributed by D95.

It belongs to the MobA family. It depends on Mg(2+) as a cofactor.

Its subcellular location is the cytoplasm. It carries out the reaction Mo-molybdopterin + GTP + H(+) = Mo-molybdopterin guanine dinucleotide + diphosphate. Transfers a GMP moiety from GTP to Mo-molybdopterin (Mo-MPT) cofactor (Moco or molybdenum cofactor) to form Mo-molybdopterin guanine dinucleotide (Mo-MGD) cofactor. The sequence is that of Probable molybdenum cofactor guanylyltransferase from Pelotomaculum thermopropionicum (strain DSM 13744 / JCM 10971 / SI).